The primary structure comprises 791 residues: MNNQRKKTGRPSFNMLKRARNRVSTGSQLAKRFSKGLLSGQGPMKLVMAFIAFLRFLAIPPTAGILARWSSFKKNGAIKVLRGFKKEISSMLNIMNRRKRSVTMLLMLLPTALAFHLTTRGGEPTLIVSKQERGKSLLFKTSAGVNMCTLIAMDLGELCEDTMTYKCPRITERQPDDVDCWCNATDTWVTYGTCSQTGEHRRDKRSVALAPHVGLGLETRTETWMSSEGAWKQIQKVETWALRHPGFTVIGLFLAHAIGTSITQKGIIFILLMLVTPSMAMRCVGIGNRDFVEGLSGATWVDVVLEHGSCVTTMAKNKPTLDIELLKTEVTNPAVLRKLCIEAKISNTTTDSRCPTQGEATLVEEQDANFVCRRTFVDRGWGNGCGLFGKGSFLTCAKFKCVTKLEGKIVQYENLKYSVIVTVHTGDQHQVGNETTEHGTIATITPQAPTSEIQLTDYGALTLDCSPRTGLDFNRVVLLTMKKKSWLVHKQWFLDLPLPWTSGASTSQETWNRQDLLVTFKTAHAKKQEVVVLGSQEGAMHTALTGATEIQTSGTTTIFAGHLKCRLKMDKLTLKGMSYVMCTGSFKLEKEVAETQHGTVLVQVKYEGTDAPCKIPFSSQDEKGVTQNGRLITANPIVIDKEKPVNIEAEPPFGESYIVVGSGEKALKLSWFKKGSSIGKMFEATARGARRMAILGDTAWDFGSIGGVFTSVGKLIHQIFGTAYGILFSGVSWTMKIGIGILLTWLGLNSRSTSLSMTCIAVGMVTLYLGVMVQADSGCVINWKGKELKCG.

An interaction with host EXOC1 region spans residues 1 to 15; sequence MNNQRKKTGRPSFNM. Residues 1-101 lie on the Cytoplasmic side of the membrane; that stretch reads MNNQRKKTGR…LNIMNRRKRS (101 aa). Residues 37–72 form a hydrophobic; homodimerization of capsid protein C region; sequence LLSGQGPMKLVMAFIAFLRFLAIPPTAGILARWSSF. The propeptide at 101–114 is ER anchor for the capsid protein C, removed in mature form by serine protease NS3; sequence SVTMLLMLLPTALA. Residues 102-119 traverse the membrane as a helical segment; sequence VTMLLMLLPTALAFHLTT. Residues 120–242 are Extracellular-facing; it reads RGGEPTLIVS…QIQKVETWAL (123 aa). N-linked (GlcNAc...) asparagine; by host glycosylation occurs at Asn183. A helical membrane pass occupies residues 243-260; the sequence is RHPGFTVIGLFLAHAIGT. A topological domain (cytoplasmic) is located at residue Ser261. A helical transmembrane segment spans residues 262–280; the sequence is ITQKGIIFILLMLVTPSMA. Topologically, residues 281 to 725 are extracellular; sequence MRCVGIGNRD…IHQIFGTAYG (445 aa). Cystine bridges form between Cys283-Cys310, Cys340-Cys401, Cys354-Cys385, and Cys372-Cys396. An N-linked (GlcNAc...) asparagine; by host glycan is attached at Asn347. Residues 378–391 are fusion peptide; it reads DRGWGNGCGLFGKG. Asn433 is a glycosylation site (N-linked (GlcNAc...) asparagine; by host). Disulfide bonds link Cys465–Cys565 and Cys582–Cys613. Residues 726–746 traverse the membrane as a helical segment; that stretch reads ILFSGVSWTMKIGIGILLTWL. Over 747-752 the chain is Cytoplasmic; sequence GLNSRS. Residues 753–775 traverse the membrane as a helical segment; that stretch reads TSLSMTCIAVGMVTLYLGVMVQA. At 776 to 791 the chain is on the extracellular side; the sequence is DSGCVINWKGKELKCG. Cys779 and Cys790 are disulfide-bonded.

Homodimer. Interacts (via N-terminus) with host EXOC1 (via C-terminus); this interaction results in EXOC1 degradation through the proteasome degradation pathway. In terms of assembly, forms heterodimers with envelope protein E in the endoplasmic reticulum and Golgi. As to quaternary structure, homodimer; in the endoplasmic reticulum and Golgi. Interacts with protein prM. Interacts with non-structural protein 1. Homodimer; Homohexamer when secreted. Interacts with envelope protein E. In terms of processing, specific enzymatic cleavages in vivo yield mature proteins. Cleavages in the lumen of endoplasmic reticulum are performed by host signal peptidase, wereas cleavages in the cytoplasmic side are performed by serine protease NS3. Signal cleavage at the 2K-4B site requires a prior NS3 protease-mediated cleavage at the 4A-2K site. Post-translationally, N-glycosylated. N-glycosylated. The excreted form is glycosylated and this is required for efficient secretion of the protein from infected cells.

Its subcellular location is the virion. The protein resides in the host nucleus. The protein localises to the host cytoplasm. It localises to the host perinuclear region. It is found in the secreted. Its subcellular location is the virion membrane. The protein resides in the host endoplasmic reticulum membrane. Its function is as follows. Plays a role in virus budding by binding to the cell membrane and gathering the viral RNA into a nucleocapsid that forms the core of a mature virus particle. During virus entry, may induce genome penetration into the host cytoplasm after hemifusion induced by the surface proteins. Can migrate to the cell nucleus where it modulates host functions. Overcomes the anti-viral effects of host EXOC1 by sequestering and degrading the latter through the proteasome degradation pathway. In terms of biological role, inhibits RNA silencing by interfering with host Dicer. Functionally, prevents premature fusion activity of envelope proteins in trans-Golgi by binding to envelope protein E at pH6.0. After virion release in extracellular space, gets dissociated from E dimers. Acts as a chaperone for envelope protein E during intracellular virion assembly by masking and inactivating envelope protein E fusion peptide. prM is the only viral peptide matured by host furin in the trans-Golgi network probably to avoid catastrophic activation of the viral fusion activity in acidic GolGi compartment prior to virion release. prM-E cleavage is inefficient, and many virions are only partially matured. These uncleaved prM would play a role in immune evasion. Its function is as follows. May play a role in virus budding. Exerts cytotoxic effects by activating a mitochondrial apoptotic pathway through M ectodomain. May display a viroporin activity. In terms of biological role, binds to host cell surface receptor and mediates fusion between viral and cellular membranes. Envelope protein is synthesized in the endoplasmic reticulum in the form of heterodimer with protein prM. They play a role in virion budding in the ER, and the newly formed immature particle is covered with 60 spikes composed of heterodimer between precursor prM and envelope protein E. The virion is transported to the Golgi apparatus where the low pH causes dissociation of PrM-E heterodimers and formation of E homodimers. prM-E cleavage is inefficient, and many virions are only partially matured. These uncleaved prM would play a role in immune evasion. Functionally, involved in immune evasion, pathogenesis and viral replication. Once cleaved off the polyprotein, is targeted to three destinations: the viral replication cycle, the plasma membrane and the extracellular compartment. Essential for viral replication. Required for formation of the replication complex and recruitment of other non-structural proteins to the ER-derived membrane structures. Excreted as a hexameric lipoparticle that plays a role against host immune response. Antagonizing the complement function. Binds to the host macrophages and dendritic cells. Inhibits signal transduction originating from Toll-like receptor 3 (TLR3). Disrupts the host endothelial glycocalyx layer of host pulmonary microvascular endothelial cells, inducing degradation of sialic acid and shedding of heparan sulfate proteoglycans. NS1 induces expression of sialidases, heparanase, and activates cathepsin L, which activates heparanase via enzymatic cleavage. These effects are probably linked to the endothelial hyperpermeability observed in severe dengue disease. This chain is Genome polyprotein, found in Dengue virus type 1 (strain Jamaica/CV1636/1977) (DENV-1).